Here is a 295-residue protein sequence, read N- to C-terminus: Shikimate dehydrogenase (NADP(+)) (295 aa).

Shikimate is bound by residues Ser-18–Ser-20 and Thr-66. Catalysis depends on Lys-70, which acts as the Proton acceptor. Shikimate-binding residues include Asn-91 and Asp-106. Residues Gly-130–Ala-134 and Met-235 contribute to the NADP(+) site. Tyr-237 provides a ligand contact to shikimate. Gly-258 lines the NADP(+) pocket.

Belongs to the shikimate dehydrogenase family. As to quaternary structure, homodimer.

The catalysed reaction is shikimate + NADP(+) = 3-dehydroshikimate + NADPH + H(+). Its pathway is metabolic intermediate biosynthesis; chorismate biosynthesis; chorismate from D-erythrose 4-phosphate and phosphoenolpyruvate: step 4/7. Involved in the biosynthesis of the chorismate, which leads to the biosynthesis of aromatic amino acids. Catalyzes the reversible NADPH linked reduction of 3-dehydroshikimate (DHSA) to yield shikimate (SA). The chain is Shikimate dehydrogenase (NADP(+)) from Chlorobium phaeobacteroides (strain DSM 266 / SMG 266 / 2430).